Reading from the N-terminus, the 189-residue chain is NADH-quinone oxidoreductase subunit B (189 aa).

Residues Cys39, Cys40, Cys104, and Cys135 each contribute to the [4Fe-4S] cluster site.

Belongs to the complex I 20 kDa subunit family. In terms of assembly, NDH-1 is composed of 14 different subunits. Subunits NuoB, C, D, E, F, and G constitute the peripheral sector of the complex. It depends on [4Fe-4S] cluster as a cofactor.

The protein resides in the cell inner membrane. The enzyme catalyses a quinone + NADH + 5 H(+)(in) = a quinol + NAD(+) + 4 H(+)(out). NDH-1 shuttles electrons from NADH, via FMN and iron-sulfur (Fe-S) centers, to quinones in the respiratory chain. The immediate electron acceptor for the enzyme in this species is believed to be a menaquinone. Couples the redox reaction to proton translocation (for every two electrons transferred, four hydrogen ions are translocated across the cytoplasmic membrane), and thus conserves the redox energy in a proton gradient. The protein is NADH-quinone oxidoreductase subunit B of Chlorobium limicola (strain DSM 245 / NBRC 103803 / 6330).